The following is a 396-amino-acid chain: Deoxyguanosinetriphosphate triphosphohydrolase-like protein (396 aa).

The HD domain occupies 62-198 (RLTHSLEVAQ…AALADDIAYN (137 aa)).

Belongs to the dGTPase family. Type 2 subfamily.

The sequence is that of Deoxyguanosinetriphosphate triphosphohydrolase-like protein from Jannaschia sp. (strain CCS1).